The chain runs to 950 residues: Voltage-gated inwardly rectifying potassium channel KCNH6 (950 aa).

Residues 1-261 (MPVRRGHVAP…YSPFKAVWDW (261 aa)) lie on the Cytoplasmic side of the membrane. The PAS domain occupies 41-70 (IIYCNDGFCELFGYSRVEVMQRPCTCDFLT). Residues 92–144 (CKVDILYYRKDASSFRCLVDVVPVKNEDGAVIMFILNFEDLAQLLAKSSSRSL) enclose the PAC domain. The tract at residues 154–174 (LGSEGSHSRPSGQGPGPGRGK) is disordered. A helical transmembrane segment spans residues 262–282 (LILLLVIYTAVFTPYSAAFLL). The Extracellular portion of the chain corresponds to 283–298 (SDQDESQRGTCGYTCS). A helical transmembrane segment spans residues 299–319 (PLTVVDLIVDIMFVVDIVINF). Over 320–340 (RTTYVNTNDEVVSHPRRIAVH) the chain is Cytoplasmic. The chain crosses the membrane as a helical span at residues 341–361 (YFKGWFLIDMVAAIPFDLLIF). Residues 362–370 (RTGSDETTT) lie on the Extracellular side of the membrane. The helical; Voltage-sensor transmembrane segment at 371 to 391 (LIGLLKTARLLRLVRVARKLD) threads the bilayer. The Cytoplasmic portion of the chain corresponds to 392 to 398 (RYSEYGA). Residues 399–419 (AVLFLLMCTFALIAHWLACIW) traverse the membrane as a helical segment. The Extracellular segment spans residues 420-463 (YAIGNVERPYLEPKIGWLDSLGAQLGKQYNGSDPASGPSVQDKY). Residues 464-484 (VTALYFTFSSLTSVGFGNVSP) constitute an intramembrane region (pore-forming). A Selectivity filter motif is present at residues 476–481 (SVGFGN). Residues 485 to 490 (NTNSEK) are Extracellular-facing. A helical membrane pass occupies residues 491–511 (VFSICVMLIGSLMYASIFGNV). Over 512-950 (SAIIQRLYSG…HGSDPGFTRS (439 aa)) the chain is Cytoplasmic. Residues 594–694 (AFRGASKGCL…IHRADLLEVL (101 aa)) form a cNMP-binding domain region. 2 disordered regions span residues 719–750 (GGLQ…APSL) and 890–950 (VPSS…FTRS). Residues 740–750 (NDSQSGAAPSL) show a composition bias toward polar residues. A compositionally biased stretch (low complexity) spans 898 to 912 (PGGLLSPLASPLRPL).

Belongs to the potassium channel family. H (Eag) (TC 1.A.1.20) subfamily. Kv11.2/KCNH6 sub-subfamily. As to quaternary structure, the potassium channel is probably composed of a homo- or heterotetrameric complex of pore-forming alpha subunits that can associate only within their subfamily. As to expression, highly expressed in celiac and superior mesenteric ganglia, but not detected in brain or in heart. Detected at low levels in retina. Also found in pituitary. Also found in the olfactory bulb (granular and mitral cell layers).

Its subcellular location is the cell membrane. The enzyme catalyses K(+)(in) = K(+)(out). Pore-forming (alpha) subunit of voltage-gated inwardly rectifying potassium channel. Characterized by unusual gating kinetics by producing relatively small outward currents during membrane depolarization and large inward currents during subsequent repolarization which reflect a rapid inactivation during depolarization and quick recovery from inactivation but slow deactivation (closing) during repolarization. Activates even more slowly than KCNH2. In Rattus norvegicus (Rat), this protein is Voltage-gated inwardly rectifying potassium channel KCNH6.